The sequence spans 155 residues: NADPH-dependent 7-cyano-7-deazaguanine reductase (155 aa).

Catalysis depends on cysteine 53, which acts as the Thioimide intermediate. The active-site Proton donor is the aspartate 60. Substrate is bound by residues 75-77 (VES) and 94-95 (HE).

Belongs to the GTP cyclohydrolase I family. QueF type 1 subfamily.

Its subcellular location is the cytoplasm. The enzyme catalyses 7-aminomethyl-7-carbaguanine + 2 NADP(+) = 7-cyano-7-deazaguanine + 2 NADPH + 3 H(+). It participates in tRNA modification; tRNA-queuosine biosynthesis. Its function is as follows. Catalyzes the NADPH-dependent reduction of 7-cyano-7-deazaguanine (preQ0) to 7-aminomethyl-7-deazaguanine (preQ1). This Brucella abortus (strain S19) protein is NADPH-dependent 7-cyano-7-deazaguanine reductase.